Consider the following 362-residue polypeptide: Phosphoserine aminotransferase (362 aa).

2 residues coordinate L-glutamate: Ser-9 and Arg-42. Residues 76 to 77, Trp-102, Thr-153, Asp-174, and Gln-197 each bind pyridoxal 5'-phosphate; that span reads GR. N6-(pyridoxal phosphate)lysine is present on Lys-198. 239-240 contacts pyridoxal 5'-phosphate; that stretch reads NT.

Belongs to the class-V pyridoxal-phosphate-dependent aminotransferase family. SerC subfamily. In terms of assembly, homodimer. Pyridoxal 5'-phosphate serves as cofactor.

It is found in the cytoplasm. The catalysed reaction is O-phospho-L-serine + 2-oxoglutarate = 3-phosphooxypyruvate + L-glutamate. The enzyme catalyses 4-(phosphooxy)-L-threonine + 2-oxoglutarate = (R)-3-hydroxy-2-oxo-4-phosphooxybutanoate + L-glutamate. The protein operates within amino-acid biosynthesis; L-serine biosynthesis; L-serine from 3-phospho-D-glycerate: step 2/3. It participates in cofactor biosynthesis; pyridoxine 5'-phosphate biosynthesis; pyridoxine 5'-phosphate from D-erythrose 4-phosphate: step 3/5. Its function is as follows. Catalyzes the reversible conversion of 3-phosphohydroxypyruvate to phosphoserine and of 3-hydroxy-2-oxo-4-phosphonooxybutanoate to phosphohydroxythreonine. This Escherichia coli (strain ATCC 8739 / DSM 1576 / NBRC 3972 / NCIMB 8545 / WDCM 00012 / Crooks) protein is Phosphoserine aminotransferase.